The following is a 229-amino-acid chain: PHO85 cyclin-5 (229 aa).

Positions 1-24 (MDGNHRFTPDSKEFNTVVKSKESS) are enriched in basic and acidic residues. The segment at 1-46 (MDGNHRFTPDSKEFNTVVKSKESSTGRNPYQTPPLEHNGTHHQTNY) is disordered.

Belongs to the cyclin family. PCL1,2 subfamily. In terms of assembly, forms a cyclin-CDK complex with PHO85.

Cyclin partner of the cyclin-dependent kinase (CDK) PHO85. Positively controls degradation of transcription factor GCN4 under favorable growth conditions. The PCL5-PHO85 cyclin-CDK holoenzyme phosphorylates GCN4, which is required for its degradation by the E3 ubiquitin ligase complex SCF(Cdc4). Amino acid starvation reduces PCL5-PHO85-associated GCN4 kinase activity and leads to stabilization of GCN4. The chain is PHO85 cyclin-5 (PCL5) from Saccharomyces cerevisiae (strain ATCC 204508 / S288c) (Baker's yeast).